We begin with the raw amino-acid sequence, 283 residues long: Pantothenate synthetase (283 aa).

An ATP-binding site is contributed by 30-37 (MGFLHEGH). H37 acts as the Proton donor in catalysis. Q61 contributes to the (R)-pantoate binding site. Q61 lines the beta-alanine pocket. 147 to 150 (GKKD) is an ATP binding site. Residue Q153 participates in (R)-pantoate binding. Residues V176 and 184–187 (MSSR) contribute to the ATP site.

The protein belongs to the pantothenate synthetase family. In terms of assembly, homodimer.

The protein localises to the cytoplasm. It carries out the reaction (R)-pantoate + beta-alanine + ATP = (R)-pantothenate + AMP + diphosphate + H(+). It participates in cofactor biosynthesis; (R)-pantothenate biosynthesis; (R)-pantothenate from (R)-pantoate and beta-alanine: step 1/1. Catalyzes the condensation of pantoate with beta-alanine in an ATP-dependent reaction via a pantoyl-adenylate intermediate. This is Pantothenate synthetase from Trichlorobacter lovleyi (strain ATCC BAA-1151 / DSM 17278 / SZ) (Geobacter lovleyi).